Reading from the N-terminus, the 333-residue chain is GDP-mannose transporter GONST1 (333 aa).

The next 9 membrane-spanning stretches (helical) occupy residues 33–55 (ALLS…KFVL), 62–84 (AGIF…LSLM), 99–121 (VWFP…LKYI), 153–170 (VWAA…GGIT), 174–196 (FNAV…SLTL), 216–238 (SMVL…FFNE), 253–275 (FWMV…MWFL), 282–304 (TYSL…LFNV), and 308–325 (LQNS…VVFA).

This sequence belongs to the nucleotide-sugar transporter family. GDP-Mannose:GMP antiporter (GMA) (TC 2.A.7.13) subfamily.

The protein localises to the golgi apparatus membrane. In terms of biological role, involved in the import of GDP-mannose from the cytoplasm into the Golgi lumen. Required for the luminal synthesis of a variety of plant cell surface components. Is required for the correct mannosylation of the glycosylinositol phosphoceramides (GIPC). Can indifferently transport GDP-mannose, GDP-Glucose, GDP-Fucose or GDP-Galactose in vitro. This is GDP-mannose transporter GONST1 from Arabidopsis thaliana (Mouse-ear cress).